The chain runs to 248 residues: Pyridoxal 4-dehydrogenase (248 aa).

11–35 (LVTGAAQGIGKAIAARLAADGATVI) contacts NAD(+). Residue Ser141 coordinates substrate. Tyr154 functions as the Proton acceptor in the catalytic mechanism.

It belongs to the short-chain dehydrogenases/reductases (SDR) family. In terms of assembly, homotetramer.

It catalyses the reaction pyridoxal + NAD(+) = 4-pyridoxolactone + NADH + H(+). The protein operates within cofactor degradation; B6 vitamer degradation; 4-pyridoxate from pyridoxal: step 1/2. Involved in the degradation of pyridoxine or pyridoxamine (free, phosphate-unbound, forms of vitamin B6). Oxidizes pyridoxal to 4-pyridoxolactone, but does not have activity toward pyridoxal 5'-phosphate, pyridoxine, pyridoxamine, pyridoxamine 5'-phosphate, 4-phthalaldehyde, 2-nitrobenzaldehyde, pyridine, formaldehyde, 2-carboxybenzaldehyde or sugars. In Mesorhizobium japonicum (strain LMG 29417 / CECT 9101 / MAFF 303099) (Mesorhizobium loti (strain MAFF 303099)), this protein is Pyridoxal 4-dehydrogenase.